The chain runs to 344 residues: Dihydroorotase (344 aa).

Zn(2+) is bound by residues His-13 and His-15. Residues 15–17 (HLR) and Asn-41 contribute to the substrate site. Zn(2+) is bound by residues Lys-99, His-136, and His-174. Lys-99 is subject to N6-carboxylysine. A substrate-binding site is contributed by His-136. Leu-219 is a binding site for substrate. Asp-247 lines the Zn(2+) pocket. Residue Asp-247 is part of the active site. Substrate-binding residues include His-251 and Ala-263.

Belongs to the metallo-dependent hydrolases superfamily. DHOase family. Class II DHOase subfamily. As to quaternary structure, homodimer. Requires Zn(2+) as cofactor.

The enzyme catalyses (S)-dihydroorotate + H2O = N-carbamoyl-L-aspartate + H(+). It functions in the pathway pyrimidine metabolism; UMP biosynthesis via de novo pathway; (S)-dihydroorotate from bicarbonate: step 3/3. In terms of biological role, catalyzes the reversible cyclization of carbamoyl aspartate to dihydroorotate. The sequence is that of Dihydroorotase from Acinetobacter baylyi (strain ATCC 33305 / BD413 / ADP1).